The primary structure comprises 46 residues: CAKHSETCKNGNCCTCTQYRGKDEPMACRRGTHGQRCQCVMKIMKH.

Contains 4 disulfide bonds. As to expression, expressed by the venom gland.

It is found in the secreted. Its function is as follows. Potent toxin that may paralyze and/or kill insect pests such as H.virescens (lepidoptera), S.exigua (beet armyworm) and M.sexta (tobacco hornworm). In Plectreurys tristis (Spider), this protein is U2-plectoxin-Pt1a.